The chain runs to 539 residues: 2,3-bisphosphoglycerate-independent phosphoglycerate mutase (539 aa).

Mn(2+)-binding residues include Asp37 and Ser86. The active site involves Ser86. Residues His147, 177–178 (RD), Arg210, Arg216, 284–287 (RADR), and Lys359 contribute to the substrate site. Mn(2+) contacts are provided by Asp426, His430, Asp467, His468, and His485.

It belongs to the BPG-independent phosphoglycerate mutase family. The cofactor is Mg(2+). Mn(2+) is required as a cofactor. As to expression, expressed ubiquitously. High expression levels in the nerve ring region, intestine and body wall muscles.

It catalyses the reaction (2R)-2-phosphoglycerate = (2R)-3-phosphoglycerate. Its pathway is carbohydrate degradation; glycolysis; pyruvate from D-glyceraldehyde 3-phosphate: step 3/5. Its activity is regulated as follows. Activity is not affected by 2,3-bisphosphoglycerate. Functionally, catalyzes the interconversion of 2-phosphoglycerate and 3-phosphoglycerate. This is 2,3-bisphosphoglycerate-independent phosphoglycerate mutase from Caenorhabditis elegans.